Here is an 887-residue protein sequence, read N- to C-terminus: Alanine--tRNA ligase (887 aa).

His-581, His-585, Cys-683, and His-687 together coordinate Zn(2+).

This sequence belongs to the class-II aminoacyl-tRNA synthetase family. The cofactor is Zn(2+).

The protein localises to the cytoplasm. The catalysed reaction is tRNA(Ala) + L-alanine + ATP = L-alanyl-tRNA(Ala) + AMP + diphosphate. In terms of biological role, catalyzes the attachment of alanine to tRNA(Ala) in a two-step reaction: alanine is first activated by ATP to form Ala-AMP and then transferred to the acceptor end of tRNA(Ala). Also edits incorrectly charged Ser-tRNA(Ala) and Gly-tRNA(Ala) via its editing domain. The protein is Alanine--tRNA ligase of Ehrlichia chaffeensis (strain ATCC CRL-10679 / Arkansas).